A 370-amino-acid polypeptide reads, in one-letter code: UDP-N-acetylglucosamine--N-acetylmuramyl-(pentapeptide) pyrophosphoryl-undecaprenol N-acetylglucosamine transferase (370 aa).

UDP-N-acetyl-alpha-D-glucosamine-binding positions include 15 to 17 (TGG), N126, R169, S197, and Q299.

Belongs to the glycosyltransferase 28 family. MurG subfamily.

Its subcellular location is the cell inner membrane. The catalysed reaction is di-trans,octa-cis-undecaprenyl diphospho-N-acetyl-alpha-D-muramoyl-L-alanyl-D-glutamyl-meso-2,6-diaminopimeloyl-D-alanyl-D-alanine + UDP-N-acetyl-alpha-D-glucosamine = di-trans,octa-cis-undecaprenyl diphospho-[N-acetyl-alpha-D-glucosaminyl-(1-&gt;4)]-N-acetyl-alpha-D-muramoyl-L-alanyl-D-glutamyl-meso-2,6-diaminopimeloyl-D-alanyl-D-alanine + UDP + H(+). The protein operates within cell wall biogenesis; peptidoglycan biosynthesis. Cell wall formation. Catalyzes the transfer of a GlcNAc subunit on undecaprenyl-pyrophosphoryl-MurNAc-pentapeptide (lipid intermediate I) to form undecaprenyl-pyrophosphoryl-MurNAc-(pentapeptide)GlcNAc (lipid intermediate II). The sequence is that of UDP-N-acetylglucosamine--N-acetylmuramyl-(pentapeptide) pyrophosphoryl-undecaprenol N-acetylglucosamine transferase from Methylorubrum populi (strain ATCC BAA-705 / NCIMB 13946 / BJ001) (Methylobacterium populi).